The following is a 216-amino-acid chain: Nucleolar protein 12 (216 aa).

Residues 33-97 (GFHKRKVERK…LVTAKTESVQ (65 aa)) adopt a coiled-coil conformation. Residues 120–216 (LLGLPLPEQG…MTGKARHNGE (97 aa)) are disordered. Acidic residues predominate over residues 129–140 (GDQDGSQEEEVS). Composition is skewed to basic residues over residues 171 to 183 (AHSRKKVKRKHPR) and 200 to 216 (KTQRRRRMTGKARHNGE).

Belongs to the RRP17 family. Interacts with KIAA1191.

It is found in the nucleus. Its subcellular location is the nucleolus. The protein localises to the cytoplasm. Its function is as follows. Multifunctional RNA binding protein that plays a role in RNA metabolism and DNA maintenance. Participates in the resolution of DNA stress and the maintenance of genome integrity by localizing to sites of DNA insults. Also plays a role in proper nucleolar organization by limiting nucleolar size and regulating nucleolar number. Mechanistically, regulates the nucleolar levels of fibrillarin and nucleolin, two key players in pre-rRNA processing and ribosome assembly. The polypeptide is Nucleolar protein 12 (Nol12) (Rattus norvegicus (Rat)).